The chain runs to 464 residues: Chromosomal replication initiator protein DnaA (464 aa).

Residues 1-82 (MKNAAELWHN…GSRLDIQFIE (82 aa)) form a domain I, interacts with DnaA modulators region. The interval 82-125 (EEGQAKHMLDRQNEEVEVMEVAPAKTKAQKTPKSSDELVMSELG) is domain II. The domain III, AAA+ region stretch occupies residues 126–342 (QLNEKYTFDT…GALTRVIAYA (217 aa)). Positions 170, 172, 173, and 174 each coordinate ATP. Residues 343 to 464 (NLVGRTIDPN…EQIKHELKHS (122 aa)) are domain IV, binds dsDNA.

Belongs to the DnaA family. As to quaternary structure, oligomerizes as a right-handed, spiral filament on DNA at oriC.

The protein resides in the cytoplasm. Plays an essential role in the initiation and regulation of chromosomal replication. ATP-DnaA binds to the origin of replication (oriC) to initiate formation of the DNA replication initiation complex once per cell cycle. Binds the DnaA box (a 9 base pair repeat at the origin) and separates the double-stranded (ds)DNA. Forms a right-handed helical filament on oriC DNA; dsDNA binds to the exterior of the filament while single-stranded (ss)DNA is stabiized in the filament's interior. The ATP-DnaA-oriC complex binds and stabilizes one strand of the AT-rich DNA unwinding element (DUE), permitting loading of DNA polymerase. After initiation quickly degrades to an ADP-DnaA complex that is not apt for DNA replication. Binds acidic phospholipids. This chain is Chromosomal replication initiator protein DnaA, found in Exiguobacterium sibiricum (strain DSM 17290 / CCUG 55495 / CIP 109462 / JCM 13490 / 255-15).